Reading from the N-terminus, the 96-residue chain is uncharacterized protein (96 aa).

A signal peptide spans 1–30 (MLILSVFCAVFYAFLTAIVANFSLKTLAIG). At 31 to 54 (ATFVKSHLKSNPIPYGDLVADSLD) the chain is on the extracellular side. A helical membrane pass occupies residues 55 to 75 (FGNITPTVTLLFAILIAVLAL). Residues 76–96 (KCEFSCSTSAPAGQASGRKVK) are Cytoplasmic-facing.

The protein localises to the membrane. This is an uncharacterized protein from Dictyostelium discoideum (Social amoeba).